The chain runs to 375 residues: MVSVNLPWELVEEILCRVPPQSLVKFRTVCKQWNSLFDDNKFVNDHFVQSQPQLIFRTESKIYSVAVNFKGPRIEVHELPLAIPGLKSEMPIRLHDYVDCDGLLFCTSYFNGVLIWNPWLRQTRFFPSIHRYPVTYDIGYDNKKQYKMLDYYKCEGDSSIKSIIYEIGLYSKKVKDLESDSTWSIFQSNSVSLNGTLYWAGVDVNNGIFIRSFSFSTEKPRTFCSLPFMYDDDNVLALAVFRKDRLSLLNLCNKTSEIKIWLTKNNINDREVGLEEDVVWINLMTVLIPNFPKFSFYWYNRPDLTYFLDNDDAKRLVICCYDETDQAYIYIVKGDMFKKIKIDQYEVLSDYSRPHFHTYIPSLVRPSRVKEDNKN.

One can recognise an F-box domain in the interval 1–46 (MVSVNLPWELVEEILCRVPPQSLVKFRTVCKQWNSLFDDNKFVNDH).

This Arabidopsis thaliana (Mouse-ear cress) protein is Putative F-box only protein 11 (FBX11).